The primary structure comprises 379 residues: Chaperone protein DnaJ (379 aa).

The 66-residue stretch at 5–70 (DYYEILGVPK…QKRAAYDQYG (66 aa)) folds into the J domain. The CR-type zinc finger occupies 134 to 212 (GVTKEIRIPT…CHGHGRIEKT (79 aa)). Zn(2+) contacts are provided by Cys-147, Cys-150, Cys-164, Cys-167, Cys-186, Cys-189, Cys-200, and Cys-203. CXXCXGXG motif repeat units follow at residues 147–154 (CEVCHGSG), 164–171 (CPTCHGAG), 186–193 (CPHCQGRG), and 200–207 (CNSCHGHG).

Belongs to the DnaJ family. As to quaternary structure, homodimer. It depends on Zn(2+) as a cofactor.

The protein resides in the cytoplasm. Its function is as follows. Participates actively in the response to hyperosmotic and heat shock by preventing the aggregation of stress-denatured proteins and by disaggregating proteins, also in an autonomous, DnaK-independent fashion. Unfolded proteins bind initially to DnaJ; upon interaction with the DnaJ-bound protein, DnaK hydrolyzes its bound ATP, resulting in the formation of a stable complex. GrpE releases ADP from DnaK; ATP binding to DnaK triggers the release of the substrate protein, thus completing the reaction cycle. Several rounds of ATP-dependent interactions between DnaJ, DnaK and GrpE are required for fully efficient folding. Also involved, together with DnaK and GrpE, in the DNA replication of plasmids through activation of initiation proteins. This chain is Chaperone protein DnaJ, found in Cronobacter sakazakii (strain ATCC BAA-894) (Enterobacter sakazakii).